Consider the following 322-residue polypeptide: CPX chromosomal region candidate gene 1 protein homolog (322 aa).

2 stretches are compositionally biased toward polar residues: residues 1-23 (MTSS…NETP) and 37-78 (TNIS…TQND). The interval 1–83 (MTSSNQGNDP…MTQNDPPDEE (83 aa)) is disordered.

This Mus musculus (Mouse) protein is CPX chromosomal region candidate gene 1 protein homolog (Cpxcr1).